Reading from the N-terminus, the 553-residue chain is Probable malate:quinone oxidoreductase (553 aa).

The interval 524 to 553 (PPPKIDVNTPSQATGTAPARPAKASADMAL) is disordered.

The protein belongs to the MQO family. It depends on FAD as a cofactor.

It carries out the reaction (S)-malate + a quinone = a quinol + oxaloacetate. Its pathway is carbohydrate metabolism; tricarboxylic acid cycle; oxaloacetate from (S)-malate (quinone route): step 1/1. The sequence is that of Probable malate:quinone oxidoreductase from Burkholderia lata (strain ATCC 17760 / DSM 23089 / LMG 22485 / NCIMB 9086 / R18194 / 383).